A 356-amino-acid polypeptide reads, in one-letter code: 3-dehydroquinate synthase (356 aa).

Residues 106–110 (GVVGD), 130–131 (TT), Lys-143, and Lys-152 contribute to the NAD(+) site. Positions 185, 248, and 265 each coordinate Zn(2+).

It belongs to the sugar phosphate cyclases superfamily. Dehydroquinate synthase family. Co(2+) is required as a cofactor. Requires Zn(2+) as cofactor. NAD(+) serves as cofactor.

It is found in the cytoplasm. The catalysed reaction is 7-phospho-2-dehydro-3-deoxy-D-arabino-heptonate = 3-dehydroquinate + phosphate. The protein operates within metabolic intermediate biosynthesis; chorismate biosynthesis; chorismate from D-erythrose 4-phosphate and phosphoenolpyruvate: step 2/7. Its function is as follows. Catalyzes the conversion of 3-deoxy-D-arabino-heptulosonate 7-phosphate (DAHP) to dehydroquinate (DHQ). The protein is 3-dehydroquinate synthase of Thermoanaerobacter sp. (strain X514).